The chain runs to 281 residues: Bifunctional protein FolD (281 aa).

Residues 165 to 167 (GRG), T192, and V233 contribute to the NADP(+) site.

The protein belongs to the tetrahydrofolate dehydrogenase/cyclohydrolase family. As to quaternary structure, homodimer.

It carries out the reaction (6R)-5,10-methylene-5,6,7,8-tetrahydrofolate + NADP(+) = (6R)-5,10-methenyltetrahydrofolate + NADPH. The enzyme catalyses (6R)-5,10-methenyltetrahydrofolate + H2O = (6R)-10-formyltetrahydrofolate + H(+). It participates in one-carbon metabolism; tetrahydrofolate interconversion. Functionally, catalyzes the oxidation of 5,10-methylenetetrahydrofolate to 5,10-methenyltetrahydrofolate and then the hydrolysis of 5,10-methenyltetrahydrofolate to 10-formyltetrahydrofolate. The chain is Bifunctional protein FolD from Mycobacterium marinum (strain ATCC BAA-535 / M).